Here is a 472-residue protein sequence, read N- to C-terminus: Velvet complex subunit umv2 (472 aa).

4 stretches are compositionally biased toward basic and acidic residues: residues 1–10 (MSRSDTDGRD), 29–59 (SQRR…DSHG), 67–80 (YSRD…HRGD), and 89–105 (SYQR…EQER). 3 disordered regions span residues 1–121 (MSRS…PLEA), 281–327 (CDDG…QFGG), and 433–472 (SQGI…EDDE). The segment covering 106–116 (SYGGASASRSS) has biased composition (low complexity). In terms of domain architecture, Velvet spans 158–441 (ENGRRYRLVV…ASQGIKIPVR (284 aa)). Polar residues predominate over residues 286 to 298 (RSSTHPQHASEST). Positions 456-466 (DGMGDYDGASG) are enriched in gly residues.

This sequence belongs to the velvet family. VelB subfamily. Component of the heterotrimeric velvet complex composed of laeA, veA and velB; VeA acting as a bridging protein between laeA and velB. Forms a heterodimeric complex with vosA; the formation of the velB-vosA complex is light-dependent.

It is found in the nucleus. Its subcellular location is the cytoplasm. Component of the velvet transcription factor complex that controls sexual/asexual developmental ratio in response to light, promoting sexual development in the darkness while stimulating asexual sporulation under illumination. The velvet complex acts as a global regulator for secondary metabolite gene expression. Component of the velB-VosA heterodimeric complex that plays a dual role in activating genes associated with spore maturation and repressing certain development-associated genes. The velB-VosA complex binds DNA through the DNA-binding domain of vosA that recognizes an 11-nucleotide consensus sequence 5'-CTGGCCGCGGC-3' consisting of two motifs in the promoters of key developmental regulatory genes. Required for full virulence on seedlings. In Mycosarcoma maydis (Corn smut fungus), this protein is Velvet complex subunit umv2.